The primary structure comprises 462 residues: MSKGKLEQVSAACHHLGFFNNAGLSAHYKLSESSSPAVADLRGLVYAAAGDLLRKHRILFAIPVNEGTPNPHFACLPWIDLRRSIAFLERSVPLASAAEEQDKELDAILEEQHNIDFQTDYGTLPFWRLIILRSKGRNDFTASFIYHHAIGDGVSGLAFHKAFCNALEAASSSTLPTDRAENIIRPDENTVVLPPLEELHPMPISPRQPPLPTASPKEWTGASIHLPCKSRWASLYISPSASNAFVQECKEMKLSVTSALSSVVAAVLFDNLPSRVEALTCIIPVSVRPWLKLPPQVIDNAIGTYFDALRVRLTRAEQRSQDPSPVGIWCGARQVSRSINAYLCDVSPSGEPYTSVAAFKTVPDVSAVFRSTLGKPRDAAFEVTNVGLFPPAAIRRPSRWKAGNVLLSRSAAVPGAAVTVSVVTGRDGTMALGFSWQEGVVEDGFMHRVRQGVWKYFEKYQS.

Belongs to the alcohol acetyltransferase FCK4 family.

The protein operates within secondary metabolite biosynthesis. Functionally, probable alcohol acetyltransferase; part of the crm gene cluster that mediates the biosynthesis of a yet unidentified copper-responsive metabolite. In contrast to crmA, is not involved in the biosynthesis of fumivalines or fumicicolins. This is Probable alcohol acetyltransferase crmB from Aspergillus fumigatus (strain ATCC MYA-4609 / CBS 101355 / FGSC A1100 / Af293) (Neosartorya fumigata).